Here is a 602-residue protein sequence, read N- to C-terminus: Alpha-glucosides permease MPH3 (602 aa).

The Cytoplasmic segment spans residues methionine 1 to threonine 106. Residues threonine 107–phenylalanine 127 form a helical membrane-spanning segment. Residues glutamine 128–glutamate 142 are Extracellular-facing. The chain crosses the membrane as a helical span at residues isoleucine 143–leucine 163. Over glutamine 164–threonine 178 the chain is Cytoplasmic. A helical transmembrane segment spans residues leucine 179–leucine 199. Position 200 (glycine 200) is a topological domain, extracellular. Residues methionine 201–valine 221 traverse the membrane as a helical segment. At serine 222 to tyrosine 234 the chain is on the cytoplasmic side. A helical membrane pass occupies residues tyrosine 235–methionine 255. Residues lysine 256–lysine 270 lie on the Extracellular side of the membrane. A helical membrane pass occupies residues leucine 271–proline 291. At glutamate 292 to arginine 363 the chain is on the cytoplasmic side. A helical membrane pass occupies residues isoleucine 364–threonine 384. Residues tyrosine 385–serine 397 are Extracellular-facing. The helical transmembrane segment at phenylalanine 398 to alanine 418 threads the bilayer. The Cytoplasmic segment spans residues serine 419–aspartate 426. The chain crosses the membrane as a helical span at residues leucine 427 to cysteine 447. At serine 448 to serine 459 the chain is on the extracellular side. The chain crosses the membrane as a helical span at residues leucine 460–valine 480. Topologically, residues serine 481–threonine 492 are cytoplasmic. A helical transmembrane segment spans residues isoleucine 493–tyrosine 513. The Extracellular segment spans residues glutamine 514 to lysine 525. The helical transmembrane segment at serine 526 to proline 546 threads the bilayer. Residues glutamate 547–glutamate 602 are Cytoplasmic-facing. The tract at residues lysine 580–glutamate 602 is disordered. Positions proline 582–isoleucine 595 are enriched in basic and acidic residues.

The protein belongs to the major facilitator superfamily. Sugar transporter (TC 2.A.1.1) family.

Its subcellular location is the cell membrane. High-affinity uptake of maltose and maltotriose. Also transports alpha-methylglucoside, glucose and turanose but not melezitose or trehalose. The protein is Alpha-glucosides permease MPH3 (MPH3) of Saccharomyces cerevisiae (strain AWRI1631) (Baker's yeast).